A 392-amino-acid chain; its full sequence is Meiotically up-regulated gene 11 protein (392 aa).

The protein resides in the cytoplasm. It is found in the nucleus. Its function is as follows. Has a role in meiosis. In Schizosaccharomyces pombe (strain 972 / ATCC 24843) (Fission yeast), this protein is Meiotically up-regulated gene 11 protein (mug11).